The chain runs to 261 residues: Glucose 1-dehydrogenase (261 aa).

Position 11-35 (11-35 (VITGSSTGLGKSMAIRFATEKAKVV)) interacts with NADP(+). Ser145 is a binding site for substrate. Tyr158 acts as the Proton acceptor in catalysis.

Belongs to the short-chain dehydrogenases/reductases (SDR) family. As to quaternary structure, homotetramer.

The catalysed reaction is D-glucose + NAD(+) = D-glucono-1,5-lactone + NADH + H(+). The enzyme catalyses D-glucose + NADP(+) = D-glucono-1,5-lactone + NADPH + H(+). The polypeptide is Glucose 1-dehydrogenase (Priestia megaterium (Bacillus megaterium)).